The following is a 238-amino-acid chain: 4-hydroxy-tetrahydrodipicolinate reductase (238 aa).

12-17 contacts NAD(+); the sequence is GASGRM. Arginine 40 is an NADP(+) binding site. NAD(+) contacts are provided by residues 93–95 and 117–120; these read GTT and ASNF. The active-site Proton donor/acceptor is the histidine 149. Histidine 150 is a (S)-2,3,4,5-tetrahydrodipicolinate binding site. The active-site Proton donor is lysine 153. 159–160 is a (S)-2,3,4,5-tetrahydrodipicolinate binding site; that stretch reads GT.

The protein belongs to the DapB family.

It localises to the cytoplasm. It catalyses the reaction (S)-2,3,4,5-tetrahydrodipicolinate + NAD(+) + H2O = (2S,4S)-4-hydroxy-2,3,4,5-tetrahydrodipicolinate + NADH + H(+). The catalysed reaction is (S)-2,3,4,5-tetrahydrodipicolinate + NADP(+) + H2O = (2S,4S)-4-hydroxy-2,3,4,5-tetrahydrodipicolinate + NADPH + H(+). Its pathway is amino-acid biosynthesis; L-lysine biosynthesis via DAP pathway; (S)-tetrahydrodipicolinate from L-aspartate: step 4/4. Functionally, catalyzes the conversion of 4-hydroxy-tetrahydrodipicolinate (HTPA) to tetrahydrodipicolinate. In Xanthomonas euvesicatoria pv. vesicatoria (strain 85-10) (Xanthomonas campestris pv. vesicatoria), this protein is 4-hydroxy-tetrahydrodipicolinate reductase.